We begin with the raw amino-acid sequence, 418 residues long: Actin-related protein 3 (418 aa).

An N-acetylalanine modification is found at A2.

Belongs to the actin family. ARP3 subfamily. Component of the Arp2/3 complex composed of ACTR2/ARP2, ACTR3/ARP3, ARPC1B/p41-ARC, ARPC2/p34-ARC, ARPC3/p21-ARC, ARPC4/p20-ARC and ARPC5/p16-ARC. As to expression, detected in fibroblasts.

It is found in the cytoplasm. The protein resides in the cytoskeleton. It localises to the cell projection. Its subcellular location is the nucleus. ATP-binding component of the Arp2/3 complex, a multiprotein complex that mediates actin polymerization upon stimulation by nucleation-promoting factor (NPF). The Arp2/3 complex mediates the formation of branched actin networks in the cytoplasm, providing the force for cell motility. Seems to contact the pointed end of the daughter actin filament. In addition to its role in the cytoplasmic cytoskeleton, the Arp2/3 complex also promotes actin polymerization in the nucleus, thereby regulating gene transcription and repair of damaged DNA. The Arp2/3 complex promotes homologous recombination (HR) repair in response to DNA damage by promoting nuclear actin polymerization, leading to drive motility of double-strand breaks (DSBs). The protein is Actin-related protein 3 (ACTR3) of Gallus gallus (Chicken).